Here is a 301-residue protein sequence, read N- to C-terminus: Sulfate adenylyltransferase subunit 2 (301 aa).

Residues 282–301 are disordered; the sequence is RLIDRDEAGSMEKKKREGYF.

Belongs to the PAPS reductase family. CysD subfamily. As to quaternary structure, heterodimer composed of CysD, the smaller subunit, and CysN.

It carries out the reaction sulfate + ATP + H(+) = adenosine 5'-phosphosulfate + diphosphate. The protein operates within sulfur metabolism; hydrogen sulfide biosynthesis; sulfite from sulfate: step 1/3. With CysN forms the ATP sulfurylase (ATPS) that catalyzes the adenylation of sulfate producing adenosine 5'-phosphosulfate (APS) and diphosphate, the first enzymatic step in sulfur assimilation pathway. APS synthesis involves the formation of a high-energy phosphoric-sulfuric acid anhydride bond driven by GTP hydrolysis by CysN coupled to ATP hydrolysis by CysD. In Chelativorans sp. (strain BNC1), this protein is Sulfate adenylyltransferase subunit 2.